Reading from the N-terminus, the 261-residue chain is Carnitinyl-CoA dehydratase (261 aa).

Glu111 (nucleophile) is an active-site residue. Glu131 acts as the Proton acceptor in catalysis.

Belongs to the enoyl-CoA hydratase/isomerase family.

It catalyses the reaction (R)-carnitinyl-CoA = crotonobetainyl-CoA + H2O. It functions in the pathway amine and polyamine metabolism; carnitine metabolism. Catalyzes the reversible dehydration of L-carnitinyl-CoA to crotonobetainyl-CoA. This is Carnitinyl-CoA dehydratase from Proteus mirabilis (strain HI4320).